Here is a 444-residue protein sequence, read N- to C-terminus: Tubulin beta chain (444 aa).

Residues 1–4 (MREI) carry the MREI motif motif. Glutamine 11 contributes to the GTP binding site. A Phosphoserine modification is found at serine 40. Position 55 is a phosphothreonine (threonine 55). N6-acetyllysine; alternate is present on lysine 58. Lysine 58 carries the post-translational modification N6-succinyllysine; alternate. A Glycyl lysine isopeptide (Lys-Gly) (interchain with G-Cter in ubiquitin); alternate cross-link involves residue lysine 58. Residues glutamate 69, serine 138, glycine 142, threonine 143, and glycine 144 each contribute to the GTP site. Residue glutamate 69 participates in Mg(2+) binding. The residue at position 172 (serine 172) is a Phosphoserine; by CDK1. 2 residues coordinate GTP: asparagine 204 and asparagine 226. Phosphothreonine occurs at positions 285 and 290. Arginine 318 is modified (omega-N-methylarginine). Residue lysine 324 forms a Glycyl lysine isopeptide (Lys-Gly) (interchain with G-Cter in ubiquitin) linkage. The segment at 423–444 (QQYQDATAEEEEDFGEEAEEEA) is disordered. Over residues 429–444 (TAEEEEDFGEEAEEEA) the composition is skewed to acidic residues. 4 positions are modified to 5-glutamyl polyglutamate: glutamate 434, glutamate 438, glutamate 439, and glutamate 441. Glutamate 438, glutamate 439, glutamate 441, glutamate 442, and glutamate 443 each carry 5-glutamyl glycine.

The protein belongs to the tubulin family. Heterodimer of alpha and beta chains. A typical microtubule is a hollow water-filled tube with an outer diameter of 25 nm and an inner diameter of 15 nM. Alpha-beta heterodimers associate head-to-tail to form protofilaments running lengthwise along the microtubule wall with the beta-tubulin subunit facing the microtubule plus end conferring a structural polarity. Microtubules usually have 13 protofilaments but different protofilament numbers can be found in some organisms and specialized cells. Interacts with CIMAP3. Interacts with DIAPH1. Interacts with MX1. May interact with RNABP10. Interacts with CFAP157. Nascent tubulin polypeptide interacts (via beta-tubulin MREI motif) with TTC5/STRAP; this interaction results in tubulin mRNA-targeted degradation. The cofactor is Mg(2+). Post-translationally, some glutamate residues at the C-terminus are polyglycylated, resulting in polyglycine chains on the gamma-carboxyl group. Glycylation is mainly limited to tubulin incorporated into axonemes (cilia and flagella) whereas glutamylation is prevalent in neuronal cells, centrioles, axonemes, and the mitotic spindle. Both modifications can coexist on the same protein on adjacent residues, and lowering polyglycylation levels increases polyglutamylation, and reciprocally. Cilia and flagella glycylation is required for their stability and maintenance. Flagella glycylation controls sperm motility. In terms of processing, some glutamate residues at the C-terminus are polyglutamylated, resulting in polyglutamate chains on the gamma-carboxyl group. Polyglutamylation plays a key role in microtubule severing by spastin (SPAST). SPAST preferentially recognizes and acts on microtubules decorated with short polyglutamate tails: severing activity by SPAST increases as the number of glutamates per tubulin rises from one to eight, but decreases beyond this glutamylation threshold. Glutamylation is also involved in cilia motility. Phosphorylated on Ser-172 by CDK1 during the cell cycle, from metaphase to telophase, but not in interphase. This phosphorylation inhibits tubulin incorporation into microtubules.

Its subcellular location is the cytoplasm. The protein resides in the cytoskeleton. Functionally, tubulin is the major constituent of microtubules, a cylinder consisting of laterally associated linear protofilaments composed of alpha- and beta-tubulin heterodimers. Microtubules grow by the addition of GTP-tubulin dimers to the microtubule end, where a stabilizing cap forms. Below the cap, tubulin dimers are in GDP-bound state, owing to GTPase activity of alpha-tubulin. In Sus scrofa (Pig), this protein is Tubulin beta chain (TUBB).